The chain runs to 89 residues: DNA/RNA-binding protein Alba (89 aa).

Belongs to the histone-like Alba family.

It localises to the cytoplasm. It is found in the chromosome. Functionally, binds double-stranded DNA tightly but without sequence specificity. Involved in DNA compaction. The chain is DNA/RNA-binding protein Alba from Methanothrix thermoacetophila (strain DSM 6194 / JCM 14653 / NBRC 101360 / PT) (Methanosaeta thermophila).